The primary structure comprises 692 residues: A-type ATP synthase subunit I (692 aa).

The next 7 membrane-spanning stretches (helical) occupy residues 389-409, 422-442, 494-514, 531-551, 553-573, 602-622, and 624-644; these read GIML…LFIW, LGYI…ITGG, ILVF…FVGF, GVWI…FAGA, TMIA…ASMY, ARLL…NIMA, and LVGE…LLVG.

The protein belongs to the V-ATPase 116 kDa subunit family. The A-type ATPase is composed of subunits A(3), B(3), C, D, E(1 or 2), F, H(2), I and K(x).

The protein localises to the cell membrane. Functionally, component of the A-type ATP synthase that produces ATP from ADP in the presence of a proton gradient across the membrane. The sequence is that of A-type ATP synthase subunit I from Methanocaldococcus jannaschii (strain ATCC 43067 / DSM 2661 / JAL-1 / JCM 10045 / NBRC 100440) (Methanococcus jannaschii).